A 298-amino-acid polypeptide reads, in one-letter code: Urease accessory protein UreD (298 aa).

It belongs to the UreD family. As to quaternary structure, ureD, UreF and UreG form a complex that acts as a GTP-hydrolysis-dependent molecular chaperone, activating the urease apoprotein by helping to assemble the nickel containing metallocenter of UreC. The UreE protein probably delivers the nickel.

The protein resides in the cytoplasm. Functionally, required for maturation of urease via the functional incorporation of the urease nickel metallocenter. This Frankia alni (strain DSM 45986 / CECT 9034 / ACN14a) protein is Urease accessory protein UreD.